The chain runs to 253 residues: Methionine aminopeptidase (253 aa).

Histidine 78 serves as a coordination point for substrate. A divalent metal cation-binding residues include aspartate 95, aspartate 106, and histidine 169. Histidine 176 provides a ligand contact to substrate. 2 residues coordinate a divalent metal cation: glutamate 206 and glutamate 237.

This sequence belongs to the peptidase M24A family. Methionine aminopeptidase type 1 subfamily. Monomer. Requires Co(2+) as cofactor. It depends on Zn(2+) as a cofactor. The cofactor is Mn(2+). Fe(2+) is required as a cofactor.

The enzyme catalyses Release of N-terminal amino acids, preferentially methionine, from peptides and arylamides.. In terms of biological role, removes the N-terminal methionine from nascent proteins. The N-terminal methionine is often cleaved when the second residue in the primary sequence is small and uncharged (Met-Ala-, Cys, Gly, Pro, Ser, Thr, or Val). Requires deformylation of the N(alpha)-formylated initiator methionine before it can be hydrolyzed. The chain is Methionine aminopeptidase from Helicobacter pylori (strain J99 / ATCC 700824) (Campylobacter pylori J99).